The primary structure comprises 819 residues: MGDSGDAVMARWLQSAGLQHLAASSTSSSSASTAGGGVDPRGGGGVGVGALGGGAGGGSLLPSLLMQGYGPQSIEEKQRLYMLLRSLNFNGETAPPSISEPYTPTAQSFGGGNSLEGFYSPELRGELGAGLLDLHAMDDTELLSEDVASEPFEPSPFIPKEMDEDDDDMLPGSQPGPSDNYNAVANEKESTARENNVAKIKVVVRKRPLNRKEVSRKEEDIITVHDSSSLTVYEPKLKVDLTAYVEKHEFCFDAVLDEQVSNDEVYRETVEPIIPIIFQRTKATCFAYGQTGSGKTYTMQPLPLRAAQDMVRLLHQPVYRNQNFKLWLSYFEIYGGKLFDLLSDRRQLLMREDGKKQVCIVGLQEFEVSDVQIVKEYIERGNAARSTGSTGANEESSRSHAILQLAIKKHIIVTDTRRQRDRDANESKNTKAVGKISFIDLAGSERGADTTDNDRQTRIEGAEINKSLLALKECIRALDNDQIHIPFRGSKLTEVLRDSFVGNSRTVMISCISPNAGSCEHTLNTLRYADRVKSLSKGSNTRKEQPTGPTIPSSKDSSSAPSYPMPIETEEIANQIQEKRPVETSRKAAENFTSNSSMEPDRNPVSMIPSYSNRGKEENGSSGLNDRERVDLNSSRISYNSKPQSVQSSANLQEEEKVTKVSPPRRKAYRDDKPERQSNYAKKDSGPETSRPGYKVQQAKQLQQQQRPTSASASQNSSRQSEKESSCDDVEIDAILEEEEALIAAHRKEIENTMEIVREEMNLLAEVDQPGSLIDNYVTQLSFLLSRKAAGLVSLQARLARFQHRLKEQEILSRKKSSR.

The tract at residues 150–178 (EPFEPSPFIPKEMDEDDDDMLPGSQPGPS) is disordered. The Kinesin motor domain maps to 199–535 (KIKVVVRKRP…LRYADRVKSL (337 aa)). 289 to 296 (GQTGSGKT) is an ATP binding site. Residues 534–729 (SLSKGSNTRK…QSEKESSCDD (196 aa)) form a disordered region. Residues 550-562 (TIPSSKDSSSAPS) show a composition bias toward low complexity. Basic and acidic residues-rich tracts occupy residues 577-589 (QEKR…RKAA) and 614-631 (RGKE…ERVD). The span at 632-652 (LNSSRISYNSKPQSVQSSANL) shows a compositional bias: polar residues. A compositionally biased stretch (basic and acidic residues) spans 669 to 686 (YRDDKPERQSNYAKKDSG). Residues 697–719 (QQAKQLQQQQRPTSASASQNSSR) show a composition bias toward low complexity. A coiled-coil region spans residues 736–767 (LEEEEALIAAHRKEIENTMEIVREEMNLLAEV).

Belongs to the TRAFAC class myosin-kinesin ATPase superfamily. Kinesin family. KIN-13 subfamily. In terms of tissue distribution, ubiquitous.

The protein localises to the microsome. The sequence is that of Kinesin-like protein KIN-13A from Oryza sativa subsp. japonica (Rice).